The sequence spans 131 residues: Arsenate reductase 1 (131 aa).

Catalysis depends on nucleophile residues Cys-10, Cys-82, and Cys-89. Disulfide bonds link Cys-10/Cys-82 and Cys-82/Cys-89.

The protein belongs to the low molecular weight phosphotyrosine protein phosphatase family. Thioredoxin-coupled ArsC subfamily.

Its subcellular location is the cytoplasm. The enzyme catalyses arsenate + [thioredoxin]-dithiol + H(+) = arsenite + [thioredoxin]-disulfide + H2O. Functionally, catalyzes the reduction of arsenate [As(V)] to arsenite [As(III)]. The polypeptide is Arsenate reductase 1 (Staphylococcus saprophyticus subsp. saprophyticus (strain ATCC 15305 / DSM 20229 / NCIMB 8711 / NCTC 7292 / S-41)).